The sequence spans 108 residues: UPF0060 membrane protein sll0793 (108 aa).

Transmembrane regions (helical) follow at residues 7–27, 32–52, 64–84, and 86–106; these read LYFV…WLWI, SVWL…VATL, YGGI…NVVV, and RLDW…MYAN.

It belongs to the UPF0060 family.

Its subcellular location is the cell inner membrane. The chain is UPF0060 membrane protein sll0793 from Synechocystis sp. (strain ATCC 27184 / PCC 6803 / Kazusa).